Reading from the N-terminus, the 520-residue chain is Beta-2-syntrophin (520 aa).

The tract at residues 45–95 (EPPAAAFNGLPNGGGGESLPGSPNRGLGPPSPPAPPRGPAGEASASPPVRR) is disordered. Over residues 63 to 72 (LPGSPNRGLG) the composition is skewed to low complexity. Over residues 73 to 82 (PPSPPAPPRG) the composition is skewed to pro residues. A phosphoserine mark is found at Ser-75, Ser-90, Ser-109, Ser-191, Ser-202, Ser-213, Ser-373, and Ser-375. The span at 83–93 (PAGEASASPPV) shows a compositional bias: low complexity. In terms of domain architecture, PDZ spans 95–178 (RVRVVKQEAG…EVLLEVKFIR (84 aa)). 2 consecutive PH domains span residues 143-280 (ILSV…TNIM) and 305-417 (EVKH…QGCH). A disordered region spans residues 195 to 220 (WEGASPQSPSFSGSEDSGSPKHQNTT). Residues 197 to 211 (GASPQSPSFSGSEDS) show a composition bias toward low complexity. Residues 464–520 (PFERLKMSADDGIRNLYLDFGGPEGELTMDLHSCPKPIVFVLHTFLSAKVTRMGLLV) enclose the SU domain. The calmodulin-binding stretch occupies residues 498-520 (PKPIVFVLHTFLSAKVTRMGLLV).

The protein belongs to the syntrophin family. Monomer and homodimer. Interacts with the dystrophin protein DMD and related protein DTNA; and with the other members of the syntrophin family: SNTA1 and SNTB1. Interacts with the neuroregulin receptor ERBB4. Interacts with PTPRN when phosphorylated, protecting PTPRN from protein cleavage by CAPN1. Dephosphorylation upon insulin stimulation disrupts the interaction with PTPRN and results in the cleavage of PTPRN. Interacts with the sodium channel proteins SCN4A and SCN5A. Interacts with SAST, MAST205, microtubules and microtubule-associated proteins. Interacts with the dystrophin related protein UTRN. Interacts with DTNB. In terms of processing, phosphorylated. Partially dephosphorylated upon insulin stimulation. As to expression, ubiquitous. Expressed at high levels in the testis.

The protein localises to the membrane. Its subcellular location is the cytoplasmic vesicle. It is found in the secretory vesicle membrane. The protein resides in the cell junction. It localises to the cytoplasm. The protein localises to the cytoskeleton. In terms of biological role, adapter protein that binds to and probably organizes the subcellular localization of a variety of membrane proteins. May link various receptors to the actin cytoskeleton and the dystrophin glycoprotein complex. May play a role in the regulation of secretory granules via its interaction with PTPRN. In Mus musculus (Mouse), this protein is Beta-2-syntrophin (Sntb2).